The following is a 476-amino-acid chain: Inner membrane transporter YcaM (476 aa).

The Cytoplasmic portion of the chain corresponds to 1–9; sequence MAGNVQEKQ. A helical membrane pass occupies residues 10-30; the sequence is LRWYNIALMSFITVWGFGNVV. The Periplasmic segment spans residues 31–38; it reads NNYANQGL. A helical transmembrane segment spans residues 39 to 59; that stretch reads VVVFSWVFIFALYFTPYALIV. Residues 60–80 lie on the Cytoplasmic side of the membrane; that stretch reads GQLGSTFKDGKGGVSTWIKHT. The chain crosses the membrane as a helical span at residues 81-101; the sequence is MGPGLAYLAAWTYWVVHIPYL. The Periplasmic portion of the chain corresponds to 102–125; sequence AQKPQAILIALGWAMKGDGSLIKE. The chain crosses the membrane as a helical span at residues 126-146; that stretch reads YSVVALQGLTLVLFIFFMWVA. At 147–154 the chain is on the cytoplasmic side; that stretch reads SRGMKSLK. A helical membrane pass occupies residues 155–175; it reads IVGSVAGIAMFVMSLLYVAMA. At 176–195 the chain is on the periplasmic side; that stretch reads VTAPAITEVHIATTNITWET. Residues 196-216 form a helical membrane-spanning segment; the sequence is FIPHIDFTYITTISMLVFAVG. Residues 217–240 lie on the Cytoplasmic side of the membrane; it reads GAEKISPYVNQTRNPGKEFPKGML. Residues 241 to 261 form a helical membrane-spanning segment; it reads CLAVMVAVCAILGSLAMGMMF. At 262 to 291 the chain is on the periplasmic side; that stretch reads DSRNIPDDLMTNGQYYAFQKLGEYYNMGNT. Residues 292-312 form a helical membrane-spanning segment; sequence LMVIYAIANTLGQVAALVFSI. Residues 313–343 lie on the Cytoplasmic side of the membrane; it reads DAPLKVLLGDADSKYIPASLCRTNASGTPVN. A helical transmembrane segment spans residues 344 to 364; it reads GYFLTLVLVAILIMLPTLGIG. Over 365–375 the chain is Periplasmic; sequence DMNNLYKWLLN. Residues 376–396 form a helical membrane-spanning segment; the sequence is LNSVVMPLRYLWVFVAFIAVV. Residues 397-414 lie on the Cytoplasmic side of the membrane; sequence RLAQKYKPEYVFIRNKPL. A helical transmembrane segment spans residues 415-435; it reads AMTVGIWCFAFTAFACLTGIF. Over 436-448 the chain is Periplasmic; that stretch reads PKMEAFTAEWTFQ. Residues 449–469 traverse the membrane as a helical segment; it reads LALNVATPFVLVGLGLIFPLL. Topologically, residues 470–476 are cytoplasmic; it reads ARKANSK.

This sequence belongs to the amino acid-polyamine-organocation (APC) superfamily.

The protein resides in the cell inner membrane. In Escherichia coli (strain K12), this protein is Inner membrane transporter YcaM (ycaM).